Consider the following 482-residue polypeptide: G patch domain-containing protein 2-like (482 aa).

3 positions are modified to phosphoserine: Ser31, Ser86, and Ser88. Thr91 bears the Phosphothreonine mark. Residue Lys196 forms a Glycyl lysine isopeptide (Lys-Gly) (interchain with G-Cter in SUMO2) linkage. Residues 198–214 are compositionally biased toward basic and acidic residues; the sequence is GRKERMECETDEQKQGS. Disordered regions lie at residues 198–247 and 413–482; these read GRKE…DDEQ and KRKR…PGYS. The segment covering 220–230 has biased composition (low complexity); that stretch reads ECETSSVCSSS. A compositionally biased stretch (polar residues) spans 439–450; sequence TPASQAPKSPSS. Ser447 and Ser449 each carry phosphoserine. The span at 456–469 shows a compositional bias: low complexity; sequence TSAAEKATDATTAT.

This is G patch domain-containing protein 2-like (GPATCH2L) from Homo sapiens (Human).